The chain runs to 371 residues: Cytochrome b (371 aa).

A run of 4 helical transmembrane segments spans residues 25-45 (FGSMLLACTSMQVLTGFFLAV), 69-90 (WMMQNLHAIGASMFFICIYIHI), 105-125 (WLSGTTLLIMLMATAFFGYVL), and 170-190 (FSALHFILSFGIISLLSLHIM). Heme b contacts are provided by His75 and His89. Residues His174 and His188 each contribute to the heme b site. His193 contacts a ubiquinone. Helical transmembrane passes span 218–238 (YKDLLMLSLVILMLLMTVSFL), 280–300 (LGGALALAMSIMILLTAPFTH), 312–332 (IMQLMFWTLVATFAVITWSAT), and 339–358 (FTVISQIASTIYFLFLIMNP).

It belongs to the cytochrome b family. In terms of assembly, the cytochrome bc1 complex contains 3 respiratory subunits (MT-CYB, CYC1 and UQCRFS1), 2 core proteins (UQCRC1 and UQCRC2) and probably 6 low-molecular weight proteins. Heme b is required as a cofactor.

It is found in the mitochondrion inner membrane. In terms of biological role, component of the ubiquinol-cytochrome c reductase complex (complex III or cytochrome b-c1 complex) that is part of the mitochondrial respiratory chain. The b-c1 complex mediates electron transfer from ubiquinol to cytochrome c. Contributes to the generation of a proton gradient across the mitochondrial membrane that is then used for ATP synthesis. This Eryx elegans (Central Asian sand boa) protein is Cytochrome b (MT-CYB).